Consider the following 427-residue polypeptide: Glutamate-1-semialdehyde 2,1-aminomutase (427 aa).

N6-(pyridoxal phosphate)lysine is present on Lys265.

It belongs to the class-III pyridoxal-phosphate-dependent aminotransferase family. HemL subfamily. Homodimer. Requires pyridoxal 5'-phosphate as cofactor.

It is found in the cytoplasm. The catalysed reaction is (S)-4-amino-5-oxopentanoate = 5-aminolevulinate. Its pathway is porphyrin-containing compound metabolism; protoporphyrin-IX biosynthesis; 5-aminolevulinate from L-glutamyl-tRNA(Glu): step 2/2. This chain is Glutamate-1-semialdehyde 2,1-aminomutase, found in Pseudomonas putida (strain ATCC 700007 / DSM 6899 / JCM 31910 / BCRC 17059 / LMG 24140 / F1).